Consider the following 421-residue polypeptide: Serine--tRNA ligase (421 aa).

229-231 (TAE) serves as a coordination point for L-serine. 260–262 (RAE) provides a ligand contact to ATP. Glutamate 283 provides a ligand contact to L-serine. Residue 347–350 (EISS) participates in ATP binding. An L-serine-binding site is contributed by serine 383.

The protein belongs to the class-II aminoacyl-tRNA synthetase family. Type-1 seryl-tRNA synthetase subfamily. In terms of assembly, homodimer. The tRNA molecule binds across the dimer.

The protein resides in the cytoplasm. The enzyme catalyses tRNA(Ser) + L-serine + ATP = L-seryl-tRNA(Ser) + AMP + diphosphate + H(+). The catalysed reaction is tRNA(Sec) + L-serine + ATP = L-seryl-tRNA(Sec) + AMP + diphosphate + H(+). It functions in the pathway aminoacyl-tRNA biosynthesis; selenocysteinyl-tRNA(Sec) biosynthesis; L-seryl-tRNA(Sec) from L-serine and tRNA(Sec): step 1/1. Functionally, catalyzes the attachment of serine to tRNA(Ser). Is also able to aminoacylate tRNA(Sec) with serine, to form the misacylated tRNA L-seryl-tRNA(Sec), which will be further converted into selenocysteinyl-tRNA(Sec). The sequence is that of Serine--tRNA ligase from Desulfitobacterium hafniense (strain Y51).